Reading from the N-terminus, the 105-residue chain is Small ribosomal subunit protein uS10 (105 aa).

It belongs to the universal ribosomal protein uS10 family. In terms of assembly, part of the 30S ribosomal subunit.

Involved in the binding of tRNA to the ribosomes. This Lachnoclostridium phytofermentans (strain ATCC 700394 / DSM 18823 / ISDg) (Clostridium phytofermentans) protein is Small ribosomal subunit protein uS10.